The following is a 315-amino-acid chain: 4-hydroxy-3-methylbut-2-enyl diphosphate reductase (315 aa).

Cys-12 provides a ligand contact to [4Fe-4S] cluster. Residues His-43 and His-81 each contribute to the (2E)-4-hydroxy-3-methylbut-2-enyl diphosphate site. Dimethylallyl diphosphate-binding residues include His-43 and His-81. Residues His-43 and His-81 each contribute to the isopentenyl diphosphate site. Cys-103 contacts [4Fe-4S] cluster. His-131 provides a ligand contact to (2E)-4-hydroxy-3-methylbut-2-enyl diphosphate. His-131 is a dimethylallyl diphosphate binding site. Residue His-131 participates in isopentenyl diphosphate binding. Residue Glu-133 is the Proton donor of the active site. Position 172 (Thr-172) interacts with (2E)-4-hydroxy-3-methylbut-2-enyl diphosphate. Cys-200 serves as a coordination point for [4Fe-4S] cluster. (2E)-4-hydroxy-3-methylbut-2-enyl diphosphate is bound by residues Ser-228, Asn-230, and Ser-273. Dimethylallyl diphosphate-binding residues include Ser-228, Asn-230, and Ser-273. Ser-228, Asn-230, and Ser-273 together coordinate isopentenyl diphosphate.

The protein belongs to the IspH family. Requires [4Fe-4S] cluster as cofactor.

It catalyses the reaction isopentenyl diphosphate + 2 oxidized [2Fe-2S]-[ferredoxin] + H2O = (2E)-4-hydroxy-3-methylbut-2-enyl diphosphate + 2 reduced [2Fe-2S]-[ferredoxin] + 2 H(+). It carries out the reaction dimethylallyl diphosphate + 2 oxidized [2Fe-2S]-[ferredoxin] + H2O = (2E)-4-hydroxy-3-methylbut-2-enyl diphosphate + 2 reduced [2Fe-2S]-[ferredoxin] + 2 H(+). The protein operates within isoprenoid biosynthesis; dimethylallyl diphosphate biosynthesis; dimethylallyl diphosphate from (2E)-4-hydroxy-3-methylbutenyl diphosphate: step 1/1. Its pathway is isoprenoid biosynthesis; isopentenyl diphosphate biosynthesis via DXP pathway; isopentenyl diphosphate from 1-deoxy-D-xylulose 5-phosphate: step 6/6. In terms of biological role, catalyzes the conversion of 1-hydroxy-2-methyl-2-(E)-butenyl 4-diphosphate (HMBPP) into a mixture of isopentenyl diphosphate (IPP) and dimethylallyl diphosphate (DMAPP). Acts in the terminal step of the DOXP/MEP pathway for isoprenoid precursor biosynthesis. This chain is 4-hydroxy-3-methylbut-2-enyl diphosphate reductase, found in Exiguobacterium sibiricum (strain DSM 17290 / CCUG 55495 / CIP 109462 / JCM 13490 / 255-15).